The chain runs to 117 residues: Small ribosomal subunit protein bS6 (117 aa).

A disordered region spans residues 96–117; that stretch reads HAEGPSVQMQKRDERDSRRERR. Over residues 105–117 the composition is skewed to basic and acidic residues; that stretch reads QKRDERDSRRERR.

The protein belongs to the bacterial ribosomal protein bS6 family.

In terms of biological role, binds together with bS18 to 16S ribosomal RNA. The polypeptide is Small ribosomal subunit protein bS6 (Ruegeria pomeroyi (strain ATCC 700808 / DSM 15171 / DSS-3) (Silicibacter pomeroyi)).